We begin with the raw amino-acid sequence, 136 residues long: uncharacterized protein (136 aa).

The chain crosses the membrane as a helical span at residues 19–39 (LGFPLGTALLLIIIFSLSGIF). 2 disordered regions span residues 54–87 (SLAN…LSVP) and 112–136 (KLTV…VPLY).

The protein localises to the membrane. This is an uncharacterized protein from Arabidopsis thaliana (Mouse-ear cress).